Consider the following 235-residue polypeptide: Lipoprotein-releasing system ATP-binding protein LolD (235 aa).

In terms of domain architecture, ABC transporter spans Phe5–Ile235. Gly40–Ser47 serves as a coordination point for ATP.

Belongs to the ABC transporter superfamily. Lipoprotein translocase (TC 3.A.1.125) family. As to quaternary structure, the complex is composed of two ATP-binding proteins (LolD) and two transmembrane proteins (LolC and LolE).

The protein localises to the cell inner membrane. Its function is as follows. Part of the ABC transporter complex LolCDE involved in the translocation of mature outer membrane-directed lipoproteins, from the inner membrane to the periplasmic chaperone, LolA. Responsible for the formation of the LolA-lipoprotein complex in an ATP-dependent manner. The sequence is that of Lipoprotein-releasing system ATP-binding protein LolD from Ehrlichia chaffeensis (strain ATCC CRL-10679 / Arkansas).